A 115-amino-acid chain; its full sequence is Large ribosomal subunit protein bL20 (115 aa).

Belongs to the bacterial ribosomal protein bL20 family.

Its function is as follows. Binds directly to 23S ribosomal RNA and is necessary for the in vitro assembly process of the 50S ribosomal subunit. It is not involved in the protein synthesizing functions of that subunit. The sequence is that of Large ribosomal subunit protein bL20 from Chlorobium luteolum (strain DSM 273 / BCRC 81028 / 2530) (Pelodictyon luteolum).